The primary structure comprises 246 residues: Adenosylcobinamide-GDP ribazoletransferase (246 aa).

Transmembrane regions (helical) follow at residues 34 to 54, 59 to 79, 113 to 133, 136 to 156, 181 to 201, and 203 to 223; these read IVTF…VALL, CGVP…TGGF, GGLA…ELLL, IHPI…AALL, TLVT…LQGL, and AALI…RTLG.

Belongs to the CobS family. The cofactor is Mg(2+).

The protein localises to the cell inner membrane. The enzyme catalyses alpha-ribazole + adenosylcob(III)inamide-GDP = adenosylcob(III)alamin + GMP + H(+). It carries out the reaction alpha-ribazole 5'-phosphate + adenosylcob(III)inamide-GDP = adenosylcob(III)alamin 5'-phosphate + GMP + H(+). It participates in cofactor biosynthesis; adenosylcobalamin biosynthesis; adenosylcobalamin from cob(II)yrinate a,c-diamide: step 7/7. Functionally, joins adenosylcobinamide-GDP and alpha-ribazole to generate adenosylcobalamin (Ado-cobalamin). Also synthesizes adenosylcobalamin 5'-phosphate from adenosylcobinamide-GDP and alpha-ribazole 5'-phosphate. This is Adenosylcobinamide-GDP ribazoletransferase from Klebsiella pneumoniae subsp. pneumoniae (strain ATCC 700721 / MGH 78578).